The following is a 520-amino-acid chain: MAPTIQTQAQREDGHRSSSHRTVPERSGVVCRVKYCNTLPDIPFDPKFITYPFDQNRFVQYKATSLEKQHKHDLLTEPDLGVTIDLINPDTYRIDPNVTLDIADEKLLEEEIQAPSSSKRSQQHAKVVPWMRKTEYISTEFNRYGVSNEKPEVKIGVSVKQQFTEEDIYKDRDSQISAIEKTFEDAQKPISQHYSKPRVTPVEVMPVFPDFKMWINPCAQVIFDSDPAPKDASGSAALDMMSQAMIRGMMDEEGNQFVAYFLPGEETMRKRKRDQEEGLDYMPEDIYDYKIAREYNWNVKNKASKGYEENYFFIFREGDGVYYNELETRVRLSKRRVKAGVQSGTNAVLVVKHRDMHEKELEAQEARRAQLENHEPEEEEEIEVDQETQGSDAEDGEKGSGSEKEGSGAEQSGSESEREEAEEEEKEDEEEKESSEEDRAARDKEEIFGSDDDDSDEDGPNESGQDGEDSGSDDEEEKGQGRRSRSASSSPFGSDHSQQENEDQSASDQGSGSSTGSDSD.

Disordered regions lie at residues Met1–Val23 and Lys359–Asp520. Positions Val351 to Ile447 form a coiled coil. Basic and acidic residues predominate over residues Lys359–His374. The span at Glu375–Gln386 shows a compositional bias: acidic residues. Over residues Gly396–Ser407 the composition is skewed to basic and acidic residues. The span at Glu417–Glu436 shows a compositional bias: acidic residues. Positions Glu437 to Ile447 are enriched in basic and acidic residues. Over residues Phe448–Glu477 the composition is skewed to acidic residues. Residues Ala506 to Asp520 show a composition bias toward low complexity.

Belongs to the PAF1 family. In terms of assembly, component of the PAF1 complex, which at least consists of cdc73, paf1, leo1, ctr9 and rtf1. The PAF1 complex interacts with PHF5A.

Its subcellular location is the nucleus. Its function is as follows. Component of the PAF1 complex (PAF1C) which has multiple functions during transcription by RNA polymerase II. PAF1C associates with RNA polymerase II, is involved in transcriptional elongation and in histone modifications including methylation on histone H3 'Lys-4' (H3K4me3). This is RNA polymerase II-associated factor 1 homolog (paf1) from Xenopus tropicalis (Western clawed frog).